The following is a 234-amino-acid chain: Large ribosomal subunit protein uL1 (234 aa).

Belongs to the universal ribosomal protein uL1 family. As to quaternary structure, part of the 50S ribosomal subunit.

Its function is as follows. Binds directly to 23S rRNA. The L1 stalk is quite mobile in the ribosome, and is involved in E site tRNA release. Functionally, protein L1 is also a translational repressor protein, it controls the translation of the L11 operon by binding to its mRNA. This is Large ribosomal subunit protein uL1 from Wolinella succinogenes (strain ATCC 29543 / DSM 1740 / CCUG 13145 / JCM 31913 / LMG 7466 / NCTC 11488 / FDC 602W) (Vibrio succinogenes).